The primary structure comprises 652 residues: Probable endo-1,3(4)-beta-glucanase AFUB_029980 (652 aa).

Positions methionine 1 to alanine 21 are cleaved as a signal peptide. One can recognise a GH16 domain in the interval glutamate 36–threonine 289. Residue asparagine 64 is glycosylated (N-linked (GlcNAc...) asparagine). Glutamate 145 (nucleophile) is an active-site residue. Residue glutamate 150 is the Proton donor of the active site. N-linked (GlcNAc...) asparagine glycosylation is found at asparagine 200 and asparagine 208. Residues asparagine 379–threonine 423 are disordered. The segment covering threonine 390–alanine 410 has biased composition (polar residues). Residue asparagine 453 is glycosylated (N-linked (GlcNAc...) asparagine). Residues serine 509–proline 551 form a disordered region. The span at aspartate 529–glutamate 540 shows a compositional bias: acidic residues. The GPI-anchor amidated asparagine moiety is linked to residue asparagine 630. The propeptide at glycine 631 to alanine 652 is removed in mature form.

Belongs to the glycosyl hydrolase 16 family.

It is found in the cell membrane. It carries out the reaction Endohydrolysis of (1-&gt;3)- or (1-&gt;4)-linkages in beta-D-glucans when the glucose residue whose reducing group is involved in the linkage to be hydrolyzed is itself substituted at C-3.. Its function is as follows. Mixed-linked glucanase involved in the degradation of complex natural cellulosic substrates. The chain is Probable endo-1,3(4)-beta-glucanase AFUB_029980 from Aspergillus fumigatus (strain CBS 144.89 / FGSC A1163 / CEA10) (Neosartorya fumigata).